We begin with the raw amino-acid sequence, 87 residues long: Large ribosomal subunit protein bL31B (87 aa).

This sequence belongs to the bacterial ribosomal protein bL31 family. Type B subfamily. Part of the 50S ribosomal subunit.

This chain is Large ribosomal subunit protein bL31B, found in Shigella boydii serotype 4 (strain Sb227).